A 928-amino-acid polypeptide reads, in one-letter code: RhoGEF domain-containing protein gxcH (928 aa).

A compositionally biased stretch (low complexity) spans 30–48; that stretch reads SKSFDNNNNNNSNTNNIKN. Disordered regions lie at residues 30 to 76, 90 to 201, and 318 to 410; these read SKSF…PPVP, ITNY…PPLG, and DNGV…NKDT. The span at 93-103 shows a compositional bias: polar residues; that stretch reads YIPTTPPSINI. Residues 112–123 are compositionally biased toward acidic residues; it reads DNYDDNYDDNYS. Composition is skewed to polar residues over residues 129 to 141, 175 to 187, and 334 to 367; these read TSTT…SPEF, ETFN…EGLQ, and KSGT…NLRG. A compositionally biased stretch (low complexity) spans 377–407; it reads NQTTNKNNSNNNNNNTTTNNNNNNNNNNNNN. Residues 484-671 form the DH domain; the sequence is IFNKVVKEII…GKIVSDINGK (188 aa). The interval 699 to 807 is PH-like; the sequence is FIGEGKVKKV…NKIEDQIVSE (109 aa). Residues 835–928 form a disordered region; that stretch reads SDSQSDFVDH…NTEPENFSFY (94 aa). A compositionally biased stretch (low complexity) spans 848-857; that stretch reads QEQQEQQQQQ.

GTPase-activating protein. This Dictyostelium discoideum (Social amoeba) protein is RhoGEF domain-containing protein gxcH (gxcH).